Here is a 449-residue protein sequence, read N- to C-terminus: Chromosomal replication initiator protein DnaA (449 aa).

The interval 1-69 (MEKVWLEAQS…VEAISSLTSV (69 aa)) is domain I, interacts with DnaA modulators. Residues 69–112 (VKYQIEFKITEKIPLESKPVDNFTPVIKDNEPSKETNKNIDITA) are domain II. Residues 113–329 (NLNPKYTFDS…GMLIRLGAYA (217 aa)) form a domain III, AAA+ region region. ATP-binding residues include glycine 157, glycine 159, lysine 160, and threonine 161. The tract at residues 330-449 (SLTGSEITLN…VENLKKELIT (120 aa)) is domain IV, binds dsDNA.

The protein belongs to the DnaA family. As to quaternary structure, oligomerizes as a right-handed, spiral filament on DNA at oriC.

It is found in the cytoplasm. In terms of biological role, plays an essential role in the initiation and regulation of chromosomal replication. ATP-DnaA binds to the origin of replication (oriC) to initiate formation of the DNA replication initiation complex once per cell cycle. Binds the DnaA box (a 9 base pair repeat at the origin) and separates the double-stranded (ds)DNA. Forms a right-handed helical filament on oriC DNA; dsDNA binds to the exterior of the filament while single-stranded (ss)DNA is stabiized in the filament's interior. The ATP-DnaA-oriC complex binds and stabilizes one strand of the AT-rich DNA unwinding element (DUE), permitting loading of DNA polymerase. After initiation quickly degrades to an ADP-DnaA complex that is not apt for DNA replication. Binds acidic phospholipids. This chain is Chromosomal replication initiator protein DnaA, found in Geotalea uraniireducens (strain Rf4) (Geobacter uraniireducens).